A 257-amino-acid polypeptide reads, in one-letter code: Isoprenyl transferase (257 aa).

Residue Asp-34 is part of the active site. Asp-34 lines the Mg(2+) pocket. Substrate contacts are provided by residues 35-38 (GNGR), Trp-39, Arg-47, His-51, and 79-81 (STE). The active-site Proton acceptor is Asn-82. Residues Trp-83, Arg-85, Arg-202, and 208 to 210 (RLS) each bind substrate. Glu-221 provides a ligand contact to Mg(2+).

It belongs to the UPP synthase family. In terms of assembly, homodimer. It depends on Mg(2+) as a cofactor.

In terms of biological role, catalyzes the condensation of isopentenyl diphosphate (IPP) with allylic pyrophosphates generating different type of terpenoids. This chain is Isoprenyl transferase, found in Geobacillus kaustophilus (strain HTA426).